Consider the following 369-residue polypeptide: MFCVAPPELETKMNITKGGLVLFSANSNSSCMELSKKIAERLGVEMGKVQVYQEPNRETRVQIQESVRGKDVFIIQTISKDVNTTIMELLIMVYACKTSCAKSIIGVIPYFPYSKQCKMRKRGSIVSKLLASMMCKAGLTHLITMDLHQKEIQGFFNIPVDNLRASPFLLQYIQEEIPDYRNAVIVAKSPASAKRAQSFAERLRLGIAVIHGEAQDAESDLVDGRHSPPMVRSVAAIHPSLEIPMLIPKEKPPITVVGDVGGRIAIIVDDIIDDVDSFLAAAETLKERGAYKIFVMATHGLLSSDAPRLIEESAIDEVVVTNTIPHEIQKLQCPKIKTVDISMILSEAIRRIHNGESMSYLFRNIGLDD.

The residue at position 1 (Met-1) is an N-acetylmethionine. A phosphoserine mark is found at Ser-219, Ser-227, and Ser-233.

Belongs to the ribose-phosphate pyrophosphokinase family. As to quaternary structure, binds to PRPS1 and PRPS2.

Seems to play a negative regulatory role in 5-phosphoribose 1-diphosphate synthesis. The protein is Phosphoribosyl pyrophosphate synthase-associated protein 2 (Prpsap2) of Mus musculus (Mouse).